A 415-amino-acid polypeptide reads, in one-letter code: 8-amino-7-oxononanoate synthase (415 aa).

Residue Arg21 participates in substrate binding. 117-118 (GY) serves as a coordination point for pyridoxal 5'-phosphate. Position 149 (His149) interacts with substrate. Pyridoxal 5'-phosphate is bound by residues Ser195, His223, and Thr251. Residue Lys254 is modified to N6-(pyridoxal phosphate)lysine. Residue Thr374 coordinates substrate.

This sequence belongs to the class-II pyridoxal-phosphate-dependent aminotransferase family. BioF subfamily. In terms of assembly, homodimer. The cofactor is pyridoxal 5'-phosphate.

The catalysed reaction is 6-carboxyhexanoyl-[ACP] + L-alanine + H(+) = (8S)-8-amino-7-oxononanoate + holo-[ACP] + CO2. It functions in the pathway cofactor biosynthesis; biotin biosynthesis. Its function is as follows. Catalyzes the decarboxylative condensation of pimeloyl-[acyl-carrier protein] and L-alanine to produce 8-amino-7-oxononanoate (AON), [acyl-carrier protein], and carbon dioxide. The polypeptide is 8-amino-7-oxononanoate synthase (Ralstonia pickettii (strain 12J)).